A 513-amino-acid chain; its full sequence is GMP synthase [glutamine-hydrolyzing] (513 aa).

The Glutamine amidotransferase type-1 domain occupies 9 to 198 (LILVLDFGSQ…VRRVCNCTGE (190 aa)). Cysteine 86 acts as the Nucleophile in catalysis. Residues histidine 172 and glutamate 174 contribute to the active site. The region spanning 199–388 (WTMENFIEIE…LGIPEHLVWR (190 aa)) is the GMPS ATP-PPase domain. 226 to 232 (SGGVDSS) lines the ATP pocket.

As to quaternary structure, homodimer.

It carries out the reaction XMP + L-glutamine + ATP + H2O = GMP + L-glutamate + AMP + diphosphate + 2 H(+). Its pathway is purine metabolism; GMP biosynthesis; GMP from XMP (L-Gln route): step 1/1. Its function is as follows. Catalyzes the synthesis of GMP from XMP. The chain is GMP synthase [glutamine-hydrolyzing] from Staphylococcus epidermidis (strain ATCC 12228 / FDA PCI 1200).